A 184-amino-acid chain; its full sequence is Ribose 1,5-bisphosphate phosphokinase PhnN (184 aa).

G11 to D18 is an ATP binding site.

It belongs to the ribose 1,5-bisphosphokinase family.

It carries out the reaction alpha-D-ribose 1,5-bisphosphate + ATP = 5-phospho-alpha-D-ribose 1-diphosphate + ADP. Its pathway is metabolic intermediate biosynthesis; 5-phospho-alpha-D-ribose 1-diphosphate biosynthesis; 5-phospho-alpha-D-ribose 1-diphosphate from D-ribose 5-phosphate (route II): step 3/3. Its function is as follows. Catalyzes the phosphorylation of ribose 1,5-bisphosphate to 5-phospho-D-ribosyl alpha-1-diphosphate (PRPP). The protein is Ribose 1,5-bisphosphate phosphokinase PhnN of Burkholderia pseudomallei (strain K96243).